Reading from the N-terminus, the 342-residue chain is AM-toxin biosynthesis protein 12 (342 aa).

An N-terminal signal peptide occupies residues 1–20; that stretch reads MSLLITSLAWGALLDPEVSS.

The protein operates within mycotoxin biosynthesis. Part of the gene clusters that mediate the biosynthesis of AM-toxins, host-selective toxins (HSTs) causing Alternaria blotch on apple, a worldwide distributed disease. AM-toxins are cyclic depsipeptides containing the 3 residues 2-hydroxy-isovaleric acid (2-HIV), dehydroalanine, L-alanine which are common for all 3 AM-toxins I to III. The fourth precursor is L-alpha-amino-methoxyphenyl-valeric acid (L-Amv) for AM-toxin I, L-alpha-amino-phenyl-valeric acid (L-Apv) for AM-toxin II, and L-alpha-amino-hydroxyphenyl-valeric acid (L-Ahv) for AM-toxin III. AM-toxins have two target sites for affecting susceptible apple cells; they cause invagination of the plasma membrane and electrolyte loss and chloroplast disorganization. The non-ribosomal peptide synthetase AMT1 contains 4 catalytic modules and is responsible for activation of each residue in AM-toxin. The aldo-keto reductase AMT2 catalyzes the conversion of 2-keto-isovaleric acid (2-KIV) to 2-hydroxy-isovaleric acid (2-HIV), one of the precursor residues incorporated by AMT1 during AM-toxin biosynthesis, by reduction of its ketone to an alcohol. The cytochrome P450 monooxygenase AMT3 and the thioesterase AMT4 are also important for AM-toxin production, but their exact function within the AM-toxin biosynthesis are not known yet. Up to 21 proteins (including AMT1 to AMT4) are predicted to be involved in AM-toxin biosynthesis since their expression ishighly up-regulated in AM-toxin-producing cultures. The sequence is that of AM-toxin biosynthesis protein 12 from Alternaria alternata (Alternaria rot fungus).